The primary structure comprises 264 residues: PDZ domain-containing protein 9 (264 aa).

The PDZ domain occupies 30-109; it reads QTKLTVGSLG…GTVLQIKVYR (80 aa).

The chain is PDZ domain-containing protein 9 (PDZD9) from Homo sapiens (Human).